The chain runs to 149 residues: Detocs response regulatory protein DtcB (149 aa).

Residues 1 to 134 form the Response regulatory domain; sequence MILIVEDDAH…DIEACYYDHN (134 aa). Residue Asp53 is modified to 4-aspartylphosphate.

Probably phosphorylated by DtcA.

Possible phosphate scavenger member of the two-component regulatory system Detocs that confers resistance to bacteriophage. When the system (DtcA-DtcB-DtcC) is expressed in a susceptible E.coli (strain MG1655) it confers resistance to bacteriophages T2, T4, T5, T6 and SECphi27. Detocs inhibits T5 infection leading to growth arrest but not complete cell lysis, during SECphi27 infection leads to cell lysis. Overexpression of this protein along with the intact Detocs locus cancels T5 immunity; when the phosphate-receiving Asp-53 is mutated to Ala in this protein, immunity is restored. DtcA probably autophosphorylates upon sensing viral infection, and subsequently transfers the phosphate signal to DtcC which activates it, leading to an antiviral defense; DtcB (this subunit) may scavenge phosphorylation signals from accidental activation of DtcA. This is Detocs response regulatory protein DtcB from Vibrio alginolyticus.